The primary structure comprises 29 residues: Cytochrome b6-f complex subunit 8 (29 aa).

A helical membrane pass occupies residues 3–23 (IISLGWSSLLVVFTFSLSLVV).

The protein belongs to the PetN family. As to quaternary structure, the 4 large subunits of the cytochrome b6-f complex are cytochrome b6, subunit IV (17 kDa polypeptide, PetD), cytochrome f and the Rieske protein, while the 4 small subunits are PetG, PetL, PetM and PetN. The complex functions as a dimer.

It localises to the plastid. The protein localises to the chloroplast thylakoid membrane. Component of the cytochrome b6-f complex, which mediates electron transfer between photosystem II (PSII) and photosystem I (PSI), cyclic electron flow around PSI, and state transitions. In Rhodomonas salina (Cryptomonas salina), this protein is Cytochrome b6-f complex subunit 8.